A 309-amino-acid polypeptide reads, in one-letter code: Taste receptor type 2 member 31 (309 aa).

Topologically, residues 1 to 2 are extracellular; that stretch reads MT. A helical transmembrane segment spans residues 3-23; it reads TFLPIIFSSLVVVIFVIGNFA. The Cytoplasmic portion of the chain corresponds to 24-55; it reads NGFIALVNSIEWFKXQKISFADQILTALAVSR. The helical transmembrane segment at 56–76 threads the bilayer; it reads VGLLWVLLLNWYSTVLNPAFY. Residues 77–100 lie on the Extracellular side of the membrane; the sequence is SVEVRTTAYNVWAVTGHFSNWLAT. Residues 101–121 traverse the membrane as a helical segment; that stretch reads SLSIFYLLKIANFSNFIFLHL. The Cytoplasmic segment spans residues 122–126; sequence KRRVK. The helical transmembrane segment at 127–147 threads the bilayer; it reads SVILVMLLGPLLFLACQLFMI. At 148 to 181 the chain is on the extracellular side; sequence NMKEIVRTKEYEGNMTWKIKLRSAVYLSDATVTT. N-linked (GlcNAc...) asparagine glycosylation is present at Asn161. The helical transmembrane segment at 182–202 threads the bilayer; it reads LGNLVPFTLTLLCFLLLICSL. Topologically, residues 203-229 are cytoplasmic; it reads CKHLKKMQLHGKGSQDPSTKVHIKVLQ. Residues 230–250 form a helical membrane-spanning segment; sequence TVISFLLLCAIYFLSIMISVW. Topologically, residues 251–259 are extracellular; that stretch reads SFGSLKNKP. A helical transmembrane segment spans residues 260–280; the sequence is VFMFCKAIRFSYPSIHPFILI. Residues 281–309 are Cytoplasmic-facing; sequence WGNKKLKQTFLSVLRQVRYWVKGEKPSSP.

This sequence belongs to the G-protein coupled receptor T2R family.

It localises to the membrane. In terms of biological role, receptor that may play a role in the perception of bitterness and is gustducin-linked. May play a role in sensing the chemical composition of the gastrointestinal content. The activity of this receptor may stimulate alpha gustducin, mediate PLC-beta-2 activation and lead to the gating of TRPM5. This Pan paniscus (Pygmy chimpanzee) protein is Taste receptor type 2 member 31 (TAS2R31).